Consider the following 802-residue polypeptide: Cullin-4 (802 aa).

2 stretches are compositionally biased toward low complexity: residues 1–33 and 656–676; these read MNFNNNNNNNNNNNNNNNLNNNNNNVNNINNNN and STSSNTSSNTSSNTSSSASGS. Disordered stretches follow at residues 1-43 and 656-686; these read MNFN…SLAG and STSSNTSSNTSSNTSSSASGSASGGASGGAT. The Cullin neddylation domain maps to 734–794; the sequence is DRQYQVDAAI…KEYLCRDPEN (61 aa). Residue K748 forms a Glycyl lysine isopeptide (Lys-Gly) (interchain with G-Cter in NEDD8) linkage.

It belongs to the cullin family. Post-translationally, neddylated. Deneddylated via its interaction with the COP9 signalosome (CSN) complex.

The protein operates within protein modification; protein ubiquitination. Functionally, probable core component of cullin-based SCF-like E3 ubiquitin-protein ligase complexes which mediate the ubiquitination and subsequent proteasomal degradation of target proteins. The E3 ubiquitin-protein ligase activity of the complex is dependent on the neddylation of the cullin subunit. The polypeptide is Cullin-4 (culD) (Dictyostelium discoideum (Social amoeba)).